A 472-amino-acid chain; its full sequence is Poly(A) polymerase catalytic subunit (472 aa).

Residues Asp-191 and Asp-193 contribute to the active site.

It belongs to the poxviridae poly(A) polymerase catalytic subunit family. Heterodimer of a large (catalytic) subunit and a small (regulatory) subunit.

It carries out the reaction RNA(n) + ATP = RNA(n)-3'-adenine ribonucleotide + diphosphate. In terms of biological role, polymerase that creates the 3'-poly(A) tail of mRNA's. The polypeptide is Poly(A) polymerase catalytic subunit (PAPL) (Capra hircus (Goat)).